A 467-amino-acid polypeptide reads, in one-letter code: Probable circularly permuted 1,3-beta-glucanase TOS1 (467 aa).

The first 21 residues, 1–21 (MKFSSTTLLAGLSSLTATVSA), serve as a signal peptide directing secretion. A compositionally biased stretch (low complexity) spans 158 to 172 (PAVSSAAADDNANSG). Disordered regions lie at residues 158-187 (PAVSSAAADDNANSGSGSGSSAGSGSGYGS) and 200-223 (SDISTKSAPTSTSAQPSSSETASV). Positions 173–185 (SGSGSSAGSGSGY) are enriched in gly residues. Positions 203–222 (STKSAPTSTSAQPSSSETAS) are enriched in low complexity. An ExDxxE motif motif is present at residues 374–379 (ELDLFE). The disordered stretch occupies residues 391–413 (HLHDGQGSSQNSNNGGGGSQDYF).

This sequence belongs to the PGA52 family. Post-translationally, cleaved by KEX2 in vitro.

It is found in the secreted. It catalyses the reaction Hydrolysis of (1-&gt;3)-beta-D-glucosidic linkages in (1-&gt;3)-beta-D-glucans.. Its function is as follows. Probable circularly permuted 1,3-beta-glucanase involved in cell wall modification through beta-1,3-glucan network alterations such as increased branching or remodeling. Plays a role in engulfment by host macrophages. In Candida albicans (strain SC5314 / ATCC MYA-2876) (Yeast), this protein is Probable circularly permuted 1,3-beta-glucanase TOS1.